Here is a 287-residue protein sequence, read N- to C-terminus: Cyclopropane mycolic acid synthase 1 (287 aa).

S-adenosyl-L-methionine-binding positions include 33 to 34, 68 to 76, 94 to 99, and 123 to 124; these read YS, LLDVGCGWG, TLSKNQ, and WE. Cysteine 269 is a catalytic residue.

It belongs to the CFA/CMAS family. As to quaternary structure, homodimer.

It localises to the cytoplasm. It catalyses the reaction a 1-acyl-2-(9Z)-enoyl-sn-glycero-3-phospholipid + S-adenosyl-L-methionine = a 1-acyl-2-(9-cyclopronane)-acyl-sn-glycero-3-phospholipid + S-adenosyl-L-homocysteine + H(+). It participates in lipid metabolism; mycolic acid biosynthesis. Functionally, catalyzes the conversion of a double bond to a cyclopropane ring at the distal position of an alpha mycolic acid via the transfer of a methylene group from S-adenosyl-L-methionine. Cyclopropanated mycolic acids are key factors participating in cell envelope permeability, host immunomodulation and persistence. This Mycobacterium tuberculosis (strain ATCC 25177 / H37Ra) protein is Cyclopropane mycolic acid synthase 1 (cmaA1).